The following is a 63-amino-acid chain: ATP synthase membrane subunit K, mitochondrial (63 aa).

A helical transmembrane segment spans residues 15 to 37 (TMRGRANVAKATWASLGLVYVLV).

F-type ATPases have 2 components, CF(1) - the catalytic core - and CF(0) - the membrane proton channel. CF(1) has five subunits: alpha(3), beta(3), gamma(1), delta(1), epsilon(1). CF(0) has three main subunits: a, b and c. The ATP synthase complex/complex V exists as a monomeric and a dimeric supercomplex that helps shape mitochondrial cristae to optimize proton flow.

The protein localises to the mitochondrion membrane. Its function is as follows. Mitochondrial membrane ATP synthase (F(1)F(0) ATP synthase or Complex V) produces ATP from ADP in the presence of a proton gradient across the membrane which is generated by electron transport complexes of the respiratory chain. F-type ATPases consist of two structural domains, F(1) - containing the extramembraneous catalytic core and F(0) - containing the membrane proton channel, linked together by a central stalk and a peripheral stalk. During catalysis, ATP synthesis in the catalytic domain of F(1) is coupled via a rotary mechanism of the central stalk subunits to proton translocation. ATP5MK is a minor subunit of the mitochondrial membrane ATP synthase required for dimerization of the ATP synthase complex and as such regulates ATP synthesis in the mitochondria. This is ATP synthase membrane subunit K, mitochondrial from Drosophila melanogaster (Fruit fly).